We begin with the raw amino-acid sequence, 253 residues long: Phosphate import ATP-binding protein PstB (253 aa).

Positions 8–248 constitute an ABC transporter domain; sequence IQVRDLDLFY…PRDKRTEDYI (241 aa). 40–47 is an ATP binding site; that stretch reads GPSGCGKS.

Belongs to the ABC transporter superfamily. Phosphate importer (TC 3.A.1.7) family. In terms of assembly, the complex is composed of two ATP-binding proteins (PstB), two transmembrane proteins (PstC and PstA) and a solute-binding protein (PstS).

It localises to the cell membrane. It carries out the reaction phosphate(out) + ATP + H2O = ADP + 2 phosphate(in) + H(+). Part of the ABC transporter complex PstSACB involved in phosphate import. Responsible for energy coupling to the transport system. This Clostridium perfringens (strain ATCC 13124 / DSM 756 / JCM 1290 / NCIMB 6125 / NCTC 8237 / Type A) protein is Phosphate import ATP-binding protein PstB.